A 301-amino-acid polypeptide reads, in one-letter code: MTIALTHLQRLEAESIHIFREVAAAFAKPVMLYSVGKDSSVLMHLAMKAFYPAKPPFPFLHVDTTWKFREMIAFRDQMAQKLGFDLLVHVNEDGVRDNINPFDHGSNTHTHVMKTVALRQALDKYGFDAAFGGARRDEEKSRAKERIFSFRNAQHVWDPKNQRPEMWKIFNTRIASGESIRVFPLSNWTELDIWQYILQENIPIVPLYFAKERPVVERDGMLILKDDDRMKLRPGETVENRLVRFRTLGCYPLTGAIESDADTLEAIVGEMLTARTSERQGRLIDRDEAGSMEKKKREGYF.

Residues Arg279–Phe301 form a disordered region.

Belongs to the PAPS reductase family. CysD subfamily. Heterodimer composed of CysD, the smaller subunit, and CysN.

The enzyme catalyses sulfate + ATP + H(+) = adenosine 5'-phosphosulfate + diphosphate. It functions in the pathway sulfur metabolism; hydrogen sulfide biosynthesis; sulfite from sulfate: step 1/3. Functionally, with CysN forms the ATP sulfurylase (ATPS) that catalyzes the adenylation of sulfate producing adenosine 5'-phosphosulfate (APS) and diphosphate, the first enzymatic step in sulfur assimilation pathway. APS synthesis involves the formation of a high-energy phosphoric-sulfuric acid anhydride bond driven by GTP hydrolysis by CysN coupled to ATP hydrolysis by CysD. This Mesorhizobium japonicum (strain LMG 29417 / CECT 9101 / MAFF 303099) (Mesorhizobium loti (strain MAFF 303099)) protein is Sulfate adenylyltransferase subunit 2.